The following is a 591-amino-acid chain: L-fucose isomerase (591 aa).

Residues Glu337 and Asp361 each act as proton acceptor in the active site. Positions 337, 361, and 528 each coordinate Mn(2+).

It belongs to the L-fucose isomerase family. As to quaternary structure, homohexamer. Mn(2+) is required as a cofactor.

It localises to the cytoplasm. The enzyme catalyses L-fucose = L-fuculose. Its pathway is carbohydrate degradation; L-fucose degradation; L-lactaldehyde and glycerone phosphate from L-fucose: step 1/3. Converts the aldose L-fucose into the corresponding ketose L-fuculose. The polypeptide is L-fucose isomerase (Salmonella heidelberg (strain SL476)).